A 254-amino-acid polypeptide reads, in one-letter code: Alcohol dehydrogenase 1 (254 aa).

Position 10–33 (10–33) interacts with NAD(+); the sequence is FVAGLGGIGLDTSREIVKSGPKNL. Ser-138 serves as a coordination point for substrate. Residue Tyr-151 is the Proton acceptor of the active site.

Belongs to the short-chain dehydrogenases/reductases (SDR) family. In terms of assembly, homodimer.

It catalyses the reaction a primary alcohol + NAD(+) = an aldehyde + NADH + H(+). The catalysed reaction is a secondary alcohol + NAD(+) = a ketone + NADH + H(+). The protein is Alcohol dehydrogenase 1 (Adh1) of Drosophila hydei (Fruit fly).